Consider the following 1133-residue polypeptide: Fas-binding factor 1 (1133 aa).

2 disordered regions span residues 89–198 (LGLK…TPIR) and 211–544 (IMAT…VPVQ). Residues 102–113 (AAKDPGKGELPN) are compositionally biased toward basic and acidic residues. The span at 125–134 (KKSLPSPSSS) shows a compositional bias: low complexity. Serine 142 carries the phosphoserine modification. Positions 165–182 (PPVTQSKTASDKSPSTVR) are enriched in polar residues. 2 stretches are compositionally biased toward basic and acidic residues: residues 221–245 (PKAE…DELL) and 259–276 (TGEH…RPQD). A compositionally biased stretch (acidic residues) spans 277–286 (SEDMWGDEDF). The span at 295-310 (VVSSEGRQSRRQSVSR) shows a compositional bias: low complexity. Over residues 325–336 (SKQSPPMASSPI) the composition is skewed to polar residues. Basic and acidic residues predominate over residues 415–424 (ASKEEKEDWL). Over residues 459 to 469 (SGSQPLTSTQG) the composition is skewed to polar residues. The span at 473-482 (AAAGGSSGTT) shows a compositional bias: low complexity. Coiled coils occupy residues 577 to 727 (AELQ…VDAA) and 773 to 870 (IRQR…EEQK). Residue lysine 960 forms a Glycyl lysine isopeptide (Lys-Gly) (interchain with G-Cter in SUMO2) linkage. The interval 1062-1085 (AASSQSALMPPAPTTRWCSQPPTG) is disordered.

As to quaternary structure, may interact with FAS cytoplasmic domain. Interacts with PARD3. Interacts with TRAPPC14. Present in various epithelial cells (at protein level).

It is found in the cytoplasm. It localises to the cytoskeleton. The protein localises to the microtubule organizing center. The protein resides in the centrosome. Its subcellular location is the centriole. It is found in the spindle pole. It localises to the cell junction. Keratin-binding protein required for epithelial cell polarization. Involved in apical junction complex (AJC) assembly via its interaction with PARD3. Required for ciliogenesis. The sequence is that of Fas-binding factor 1 (FBF1) from Homo sapiens (Human).